The following is a 293-amino-acid chain: Eukaryotic translation initiation factor 3 subunit G (293 aa).

2 disordered regions span residues Met-1–Thr-32 and Ser-163–Arg-206. A compositionally biased stretch (basic and acidic residues) spans Gly-194–Arg-206. In terms of domain architecture, RRM spans Ala-212 to Pro-290.

This sequence belongs to the eIF-3 subunit G family. Component of the eukaryotic translation initiation factor 3 (eIF-3) complex, which is composed of 13 subunits: eif3a, eif3b, eif3c, eif3d, eif3e, eif3f, eif3g, eif3h, eif3i, eif3j, eif3k, eif3l and eif3m.

It localises to the cytoplasm. RNA-binding component of the eukaryotic translation initiation factor 3 (eIF-3) complex, which is involved in protein synthesis of a specialized repertoire of mRNAs and, together with other initiation factors, stimulates binding of mRNA and methionyl-tRNAi to the 40S ribosome. The eIF-3 complex specifically targets and initiates translation of a subset of mRNAs involved in cell proliferation. This subunit can bind 18S rRNA. The polypeptide is Eukaryotic translation initiation factor 3 subunit G (eif3g) (Danio rerio (Zebrafish)).